The chain runs to 378 residues: 4-hydroxy-3-methylbut-2-en-1-yl diphosphate synthase (flavodoxin) (378 aa).

Residues Cys268, Cys271, Cys303, and Glu310 each coordinate [4Fe-4S] cluster.

The protein belongs to the IspG family. Requires [4Fe-4S] cluster as cofactor.

The catalysed reaction is (2E)-4-hydroxy-3-methylbut-2-enyl diphosphate + oxidized [flavodoxin] + H2O + 2 H(+) = 2-C-methyl-D-erythritol 2,4-cyclic diphosphate + reduced [flavodoxin]. The protein operates within isoprenoid biosynthesis; isopentenyl diphosphate biosynthesis via DXP pathway; isopentenyl diphosphate from 1-deoxy-D-xylulose 5-phosphate: step 5/6. Functionally, converts 2C-methyl-D-erythritol 2,4-cyclodiphosphate (ME-2,4cPP) into 1-hydroxy-2-methyl-2-(E)-butenyl 4-diphosphate. This is 4-hydroxy-3-methylbut-2-en-1-yl diphosphate synthase (flavodoxin) from Corynebacterium glutamicum (strain ATCC 13032 / DSM 20300 / JCM 1318 / BCRC 11384 / CCUG 27702 / LMG 3730 / NBRC 12168 / NCIMB 10025 / NRRL B-2784 / 534).